We begin with the raw amino-acid sequence, 251 residues long: tRNA (guanine-N(1)-)-methyltransferase (251 aa).

S-adenosyl-L-methionine-binding positions include glycine 114 and 134–139 (IGDYVL).

The protein belongs to the RNA methyltransferase TrmD family. Homodimer.

Its subcellular location is the cytoplasm. It catalyses the reaction guanosine(37) in tRNA + S-adenosyl-L-methionine = N(1)-methylguanosine(37) in tRNA + S-adenosyl-L-homocysteine + H(+). Specifically methylates guanosine-37 in various tRNAs. This Pelotomaculum thermopropionicum (strain DSM 13744 / JCM 10971 / SI) protein is tRNA (guanine-N(1)-)-methyltransferase.